Here is a 761-residue protein sequence, read N- to C-terminus: Cyclin-F (761 aa).

The Nuclear localization signal 1 signature appears at R19 to R27. An F-box domain is found at V28 to A75. The Cyclin N-terminal domain maps to N300–I411. Short sequence motifs (d box) lie at residues R316–L319 and R355–L358. 2 disordered regions span residues N575–T594 and A677–L761. Over residues R580 to G590 the composition is skewed to basic and acidic residues. A PEST region spans residues R589–K745. Positions S691–G718 are enriched in low complexity. The segment covering A739 to Q749 has biased composition (basic residues).

It belongs to the cyclin family. Cyclin AB subfamily. As to quaternary structure, component of the SCF(CCNF) complex.

It localises to the nucleus. It is found in the cytoplasm. The protein resides in the perinuclear region. Its subcellular location is the cytoskeleton. The protein localises to the microtubule organizing center. It localises to the centrosome. It is found in the centriole. In terms of biological role, substrate recognition component of the SCF(CCNF) E3 ubiquitin-protein ligase complex which mediates the ubiquitination and subsequent proteasomal degradation of target proteins. The SCF(CCNF) E3 ubiquitin-protein ligase complex is an integral component of the ubiquitin proteasome system (UPS) and links proteasome degradation to the cell cycle. Mediates the substrate recognition and the proteasomal degradation of various target proteins during G2 phase involved in the regulation of cell cycle progression and in the maintenance of genome stability. The sequence is that of Cyclin-F (ccnf) from Xenopus laevis (African clawed frog).